The chain runs to 221 residues: Probable septum site-determining protein MinC (221 aa).

It belongs to the MinC family. As to quaternary structure, interacts with MinD and FtsZ.

Cell division inhibitor that blocks the formation of polar Z ring septums. Rapidly oscillates between the poles of the cell to destabilize FtsZ filaments that have formed before they mature into polar Z rings. Prevents FtsZ polymerization. The protein is Probable septum site-determining protein MinC of Aliivibrio fischeri (strain ATCC 700601 / ES114) (Vibrio fischeri).